Here is a 214-residue protein sequence, read N- to C-terminus: Phosphatidylserine decarboxylase proenzyme (214 aa).

Ser182 functions as the Schiff-base intermediate with substrate; via pyruvic acid in the catalytic mechanism. Ser182 is subject to Pyruvic acid (Ser); by autocatalysis.

This sequence belongs to the phosphatidylserine decarboxylase family. PSD-A subfamily. As to quaternary structure, heterodimer of a large membrane-associated beta subunit and a small pyruvoyl-containing alpha subunit. It depends on pyruvate as a cofactor. In terms of processing, is synthesized initially as an inactive proenzyme. Formation of the active enzyme involves a self-maturation process in which the active site pyruvoyl group is generated from an internal serine residue via an autocatalytic post-translational modification. Two non-identical subunits are generated from the proenzyme in this reaction, and the pyruvate is formed at the N-terminus of the alpha chain, which is derived from the carboxyl end of the proenzyme. The post-translation cleavage follows an unusual pathway, termed non-hydrolytic serinolysis, in which the side chain hydroxyl group of the serine supplies its oxygen atom to form the C-terminus of the beta chain, while the remainder of the serine residue undergoes an oxidative deamination to produce ammonia and the pyruvoyl prosthetic group on the alpha chain.

It localises to the cell membrane. The catalysed reaction is a 1,2-diacyl-sn-glycero-3-phospho-L-serine + H(+) = a 1,2-diacyl-sn-glycero-3-phosphoethanolamine + CO2. Its pathway is phospholipid metabolism; phosphatidylethanolamine biosynthesis; phosphatidylethanolamine from CDP-diacylglycerol: step 2/2. In terms of biological role, catalyzes the formation of phosphatidylethanolamine (PtdEtn) from phosphatidylserine (PtdSer). The polypeptide is Phosphatidylserine decarboxylase proenzyme (Burkholderia ambifaria (strain MC40-6)).